Here is a 95-residue protein sequence, read N- to C-terminus: Large ribosomal subunit protein uL23 (95 aa).

It belongs to the universal ribosomal protein uL23 family. As to quaternary structure, part of the 50S ribosomal subunit. Contacts protein L29, and trigger factor when it is bound to the ribosome.

Functionally, one of the early assembly proteins it binds 23S rRNA. One of the proteins that surrounds the polypeptide exit tunnel on the outside of the ribosome. Forms the main docking site for trigger factor binding to the ribosome. In Bacillus licheniformis (strain ATCC 14580 / DSM 13 / JCM 2505 / CCUG 7422 / NBRC 12200 / NCIMB 9375 / NCTC 10341 / NRRL NRS-1264 / Gibson 46), this protein is Large ribosomal subunit protein uL23.